Reading from the N-terminus, the 620-residue chain is Sorbicillinoid biosynthetic cluster transcription factor 1 (620 aa).

Residues 10-37 constitute a DNA-binding region (zn(2)-C6 fungal-type); the sequence is CEECRRRKARCDRVRPQCGICADAGRTC. The interval 285 to 308 is disordered; sequence HDDETSPNENSGSCPSVSPSTTQN. A compositionally biased stretch (polar residues) spans 291-308; the sequence is PNENSGSCPSVSPSTTQN.

The protein resides in the nucleus. Transcription factor that acts as the main regulator of the gene cluster that mediates the biosynthesis of sorbicillinoids, a diverse group of yellow secondary metabolites that restrict growth of competing pathogenic fungi but not of bacteria. The protein is Sorbicillinoid biosynthetic cluster transcription factor 1 of Penicillium rubens (strain ATCC 28089 / DSM 1075 / NRRL 1951 / Wisconsin 54-1255) (Penicillium chrysogenum).